Here is a 132-residue protein sequence, read N- to C-terminus: Small ribosomal subunit protein uS11 (132 aa).

This sequence belongs to the universal ribosomal protein uS11 family. In terms of assembly, part of the 30S ribosomal subunit. Interacts with proteins S7 and S18. Binds to IF-3.

Functionally, located on the platform of the 30S subunit, it bridges several disparate RNA helices of the 16S rRNA. Forms part of the Shine-Dalgarno cleft in the 70S ribosome. The protein is Small ribosomal subunit protein uS11 of Chlamydia trachomatis serovar L2 (strain ATCC VR-902B / DSM 19102 / 434/Bu).